A 256-amino-acid chain; its full sequence is Non-structural protein 1 (256 aa).

It localises to the host cytoplasm. It is found in the host perinuclear region. Its function is as follows. Plays a role in inhibition of the host innate immune system by counteracting the type I interferon signaling. In Infectious salmon anemia virus (isolate Atlantic salmon/Norway/810/9/99) (ISAV), this protein is Non-structural protein 1.